The following is a 500-amino-acid chain: Nuclear distribution protein PAC1 (500 aa).

7 WD repeats span residues 125-164 (HNGHPVTAIDIHPFQPIMATASQDGTIVIWNLLNLTEPQQ), 169-219 (AHTR…NLKA), 225-265 (GHEN…IVLS), 268-310 (GHSN…LMIG), 338-378 (QNEL…IRSD), 397-436 (EHKSWVKDIAIHPNSRFIISVGDDRKINIWDLGLLLESNL), and 459-500 (IKDQ…EYIL).

The protein belongs to the WD repeat LIS1/nudF family. In terms of assembly, self-associates. Interacts with NDL1 and dynein.

It is found in the cytoplasm. The protein localises to the cytoskeleton. The protein resides in the spindle pole. Its function is as follows. Positively regulates the activity of the minus-end directed microtubule motor protein dynein. Plays a central role in positioning the mitotic spindle at the bud neck during cell division. Targets cytoplasmic dynein to microtubule plus ends, thereby promoting dynein-mediated microtubule sliding along the bud cortex and consequently the movement of the mitotic spindle to the bud neck. The sequence is that of Nuclear distribution protein PAC1 from Komagataella phaffii (strain GS115 / ATCC 20864) (Yeast).